The following is a 1413-amino-acid chain: Zinc finger protein 609 (1413 aa).

Disordered regions lie at residues methionine 1 to glutamate 26, glutamine 47 to serine 196, arginine 354 to leucine 484, alanine 517 to alanine 659, and proline 695 to aspartate 765. Serine 358, serine 361, and serine 379 each carry phosphoserine. Phosphothreonine is present on threonine 381. The segment covering alanine 386–alanine 405 has biased composition (low complexity). Phosphoserine occurs at positions 413, 433, 446, 452, 467, and 470. The segment covering alanine 423–alanine 437 has biased composition (polar residues). A Glycyl lysine isopeptide (Lys-Gly) (interchain with G-Cter in SUMO2) cross-link involves residue lysine 479. Residues isoleucine 495–histidine 520 form a C2H2-type zinc finger. A compositionally biased stretch (basic and acidic residues) spans alanine 519–alanine 529. Phosphoserine is present on residues serine 533, serine 575, and serine 577. Over residues serine 625–proline 648 the composition is skewed to basic and acidic residues. A compositionally biased stretch (basic residues) spans aspartate 725–aspartate 735. Serine 742 carries the post-translational modification Phosphoserine. Threonine 745 carries the phosphothreonine modification. Positions cysteine 750–alanine 763 are enriched in basic and acidic residues. Serine 757 carries the phosphoserine modification. Lysine 788 participates in a covalent cross-link: Glycyl lysine isopeptide (Lys-Gly) (interchain with G-Cter in SUMO2). The segment covering phenylalanine 797–alanine 843 has biased composition (polar residues). Disordered stretches follow at residues phenylalanine 797–glutamine 962, tyrosine 1004–glutamate 1127, isoleucine 1154–threonine 1221, and serine 1273–histidine 1369. Phosphoserine is present on serine 803. Threonine 822 carries the post-translational modification Phosphothreonine. Phosphoserine occurs at positions 841, 845, and 848. The span at glycine 854–lysine 875 shows a compositional bias: basic and acidic residues. Polar residues predominate over residues tyrosine 902–alanine 916. A compositionally biased stretch (basic and acidic residues) spans threonine 925 to glutamate 949. Positions leucine 950–glutamine 962 are enriched in polar residues. The span at glycine 1022 to glutamine 1044 shows a compositional bias: basic and acidic residues. Residue serine 1057 is modified to Phosphoserine. Residue lysine 1063 forms a Glycyl lysine isopeptide (Lys-Gly) (interchain with G-Cter in SUMO2) linkage. 3 stretches are compositionally biased toward basic and acidic residues: residues leucine 1099–glutamate 1115, isoleucine 1154–threonine 1189, and proline 1197–proline 1210. Lysine 1155 participates in a covalent cross-link: Glycyl lysine isopeptide (Lys-Gly) (interchain with G-Cter in SUMO2). Positions proline 1288–serine 1298 are enriched in polar residues. Lysine 1299 participates in a covalent cross-link: Glycyl lysine isopeptide (Lys-Gly) (interchain with G-Cter in SUMO2). A compositionally biased stretch (gly residues) spans glycine 1330–glycine 1348.

In terms of assembly, interacts (via N-terminus) with NIPBL. Interacts with the multiprotein complex Integrator. In terms of tissue distribution, expressed in myoblasts. Expressed in neurons in various brain regions, including striatum, prefrontal cortex, olfactory bulb, midbrain, cerebellum and hippocampus. Expressed in neural stem cells (at protein level). Expressed in thymocytes.

The protein localises to the nucleus. In terms of biological role, transcription factor, which activates RAG1, and possibly RAG2, transcription. Through the regulation of RAG1/2 expression, may regulate thymocyte maturation. Along with NIPBL and the multiprotein complex Integrator, promotes cortical neuron migration during brain development by regulating the transcription of crucial genes in this process. Preferentially binds promoters containing paused RNA polymerase II. Up-regulates the expression of SEMA3A, NRP1, PLXND1 and GABBR2 genes, among others. Functionally, involved in regulation of myoblast proliferation during myogenesis. The protein is Zinc finger protein 609 (Znf609) of Mus musculus (Mouse).